The primary structure comprises 310 residues: Cytochrome f (310 aa).

A signal peptide spans 1–27 (MRRHLSLFLGSLVIGLALLIAPAASWA). Heme-binding residues include Tyr28, Cys48, Cys51, and His52. The chain crosses the membrane as a helical span at residues 277-297 (IYGLLAFFAAVALAQIMLVLK).

It belongs to the cytochrome f family. As to quaternary structure, the 4 large subunits of the cytochrome b6-f complex are cytochrome b6, subunit IV (17 kDa polypeptide, PetD), cytochrome f and the Rieske protein, while the 4 small subunits are PetG, PetL, PetM and PetN. The complex functions as a dimer. It depends on heme as a cofactor.

It is found in the cellular thylakoid membrane. In terms of biological role, component of the cytochrome b6-f complex, which mediates electron transfer between photosystem II (PSII) and photosystem I (PSI), cyclic electron flow around PSI, and state transitions. This Synechococcus sp. (strain CC9605) protein is Cytochrome f.